Here is a 309-residue protein sequence, read N- to C-terminus: UDP-N-acetylenolpyruvoylglucosamine reductase (309 aa).

Residues 24 to 187 form the FAD-binding PCMH-type domain; the sequence is RVGGPADWLF…TKAVFEAPRG (164 aa). Arg-167 is a catalytic residue. Residues 200–213 are compositionally biased toward basic and acidic residues; that stretch reads LARRDATQPTKERS. Positions 200 to 230 are disordered; that stretch reads LARRDATQPTKERSAGSTFRNPAGFSSTGRS. The span at 214 to 228 shows a compositional bias: polar residues; sequence AGSTFRNPAGFSSTG. Ser-216 serves as the catalytic Proton donor. Glu-298 is a catalytic residue.

This sequence belongs to the MurB family. It depends on FAD as a cofactor.

It localises to the cytoplasm. The enzyme catalyses UDP-N-acetyl-alpha-D-muramate + NADP(+) = UDP-N-acetyl-3-O-(1-carboxyvinyl)-alpha-D-glucosamine + NADPH + H(+). It participates in cell wall biogenesis; peptidoglycan biosynthesis. Cell wall formation. The polypeptide is UDP-N-acetylenolpyruvoylglucosamine reductase (Roseobacter denitrificans (strain ATCC 33942 / OCh 114) (Erythrobacter sp. (strain OCh 114))).